Here is a 399-residue protein sequence, read N- to C-terminus: Dual-specificity RNA methyltransferase RlmN (399 aa).

The Proton acceptor role is filled by E120. Positions 126 to 367 (EEGRGTLCVS…SPVRTPRGRD (242 aa)) constitute a Radical SAM core domain. C133 and C372 form a disulfide bridge. [4Fe-4S] cluster contacts are provided by C140, C144, and C147. S-adenosyl-L-methionine-binding positions include 198 to 199 (GE), S230, 252 to 254 (SLH), and N329. C372 serves as the catalytic S-methylcysteine intermediate.

It belongs to the radical SAM superfamily. RlmN family. [4Fe-4S] cluster serves as cofactor.

The protein localises to the cytoplasm. The enzyme catalyses adenosine(2503) in 23S rRNA + 2 reduced [2Fe-2S]-[ferredoxin] + 2 S-adenosyl-L-methionine = 2-methyladenosine(2503) in 23S rRNA + 5'-deoxyadenosine + L-methionine + 2 oxidized [2Fe-2S]-[ferredoxin] + S-adenosyl-L-homocysteine. It carries out the reaction adenosine(37) in tRNA + 2 reduced [2Fe-2S]-[ferredoxin] + 2 S-adenosyl-L-methionine = 2-methyladenosine(37) in tRNA + 5'-deoxyadenosine + L-methionine + 2 oxidized [2Fe-2S]-[ferredoxin] + S-adenosyl-L-homocysteine. In terms of biological role, specifically methylates position 2 of adenine 2503 in 23S rRNA and position 2 of adenine 37 in tRNAs. m2A2503 modification seems to play a crucial role in the proofreading step occurring at the peptidyl transferase center and thus would serve to optimize ribosomal fidelity. The protein is Dual-specificity RNA methyltransferase RlmN of Parvibaculum lavamentivorans (strain DS-1 / DSM 13023 / NCIMB 13966).